The sequence spans 280 residues: 4-diphosphocytidyl-2-C-methyl-D-erythritol kinase (280 aa).

The active site involves Lys-9. 92–102 (PMGGGLGGGSS) contacts ATP. Asp-134 is an active-site residue.

The protein belongs to the GHMP kinase family. IspE subfamily.

The enzyme catalyses 4-CDP-2-C-methyl-D-erythritol + ATP = 4-CDP-2-C-methyl-D-erythritol 2-phosphate + ADP + H(+). The protein operates within isoprenoid biosynthesis; isopentenyl diphosphate biosynthesis via DXP pathway; isopentenyl diphosphate from 1-deoxy-D-xylulose 5-phosphate: step 3/6. Catalyzes the phosphorylation of the position 2 hydroxy group of 4-diphosphocytidyl-2C-methyl-D-erythritol. The sequence is that of 4-diphosphocytidyl-2-C-methyl-D-erythritol kinase from Nitrosococcus oceani (strain ATCC 19707 / BCRC 17464 / JCM 30415 / NCIMB 11848 / C-107).